The primary structure comprises 194 residues: Recombination protein RecR (194 aa).

The segment at 55-70 (CRECGNLAEGELCPIC) adopts a C4-type zinc-finger fold. The Toprim domain occupies 78 to 171 (SLLAVVESVA…RVTRPAYGLP (94 aa)).

It belongs to the RecR family.

May play a role in DNA repair. It seems to be involved in an RecBC-independent recombinational process of DNA repair. It may act with RecF and RecO. In Thermus thermophilus (strain ATCC 27634 / DSM 579 / HB8), this protein is Recombination protein RecR.